The sequence spans 326 residues: Interleukin-1-binding protein (326 aa).

Positions 1 to 18 are cleaved as a signal peptide; sequence MSIPPVIFLPIFFYSSFV. 3 Ig-like C2-type domains span residues 24–115, 122–208, and 221–322; these read PECI…LNLT, SNID…YDVT, and PPTM…KTVT. Cysteines 48 and 99 form a disulfide. 3 N-linked (GlcNAc...) asparagine; by host glycosylation sites follow: Asn80, Asn103, and Asn113. Residues Cys143 and Cys194 are joined by a disulfide bond. Asn237 carries N-linked (GlcNAc...) asparagine; by host glycosylation. A disulfide bridge links Cys242 with Cys309.

The protein belongs to the interleukin-1 receptor family. As to quaternary structure, interacts with mouse Il1b.

Its subcellular location is the secreted. In terms of biological role, may reduce the host inflammatory response by interacting with inteleukin-1 beta (Il1b) and thus decreasing the association between IL1B and its cellular receptor. This is Interleukin-1-binding protein (OPG201) from Bos taurus (Bovine).